Here is a 399-residue protein sequence, read N- to C-terminus: UDP-N-acetylglucosamine--N-acetylmuramyl-(pentapeptide) pyrophosphoryl-undecaprenol N-acetylglucosamine transferase (399 aa).

The segment covering 1–21 (MTSRFGHSHHPRRGRSARARA) has biased composition (basic residues). Residues 1–30 (MTSRFGHSHHPRRGRSARARAGRREGVQSN) are disordered. UDP-N-acetyl-alpha-D-glucosamine contacts are provided by residues 58–60 (TGG), Asn-170, Arg-206, Ser-234, Ile-288, and Gln-333.

Belongs to the glycosyltransferase 28 family. MurG subfamily.

The protein localises to the cell inner membrane. The enzyme catalyses di-trans,octa-cis-undecaprenyl diphospho-N-acetyl-alpha-D-muramoyl-L-alanyl-D-glutamyl-meso-2,6-diaminopimeloyl-D-alanyl-D-alanine + UDP-N-acetyl-alpha-D-glucosamine = di-trans,octa-cis-undecaprenyl diphospho-[N-acetyl-alpha-D-glucosaminyl-(1-&gt;4)]-N-acetyl-alpha-D-muramoyl-L-alanyl-D-glutamyl-meso-2,6-diaminopimeloyl-D-alanyl-D-alanine + UDP + H(+). The protein operates within cell wall biogenesis; peptidoglycan biosynthesis. Its function is as follows. Cell wall formation. Catalyzes the transfer of a GlcNAc subunit on undecaprenyl-pyrophosphoryl-MurNAc-pentapeptide (lipid intermediate I) to form undecaprenyl-pyrophosphoryl-MurNAc-(pentapeptide)GlcNAc (lipid intermediate II). This Acidovorax ebreus (strain TPSY) (Diaphorobacter sp. (strain TPSY)) protein is UDP-N-acetylglucosamine--N-acetylmuramyl-(pentapeptide) pyrophosphoryl-undecaprenol N-acetylglucosamine transferase.